A 504-amino-acid chain; its full sequence is Galactokinase (504 aa).

Alpha-D-galactose contacts are provided by R47, D53, H54, and D56. Positions 150, 152, 154, and 155 each coordinate ATP. The alpha-D-galactose site is built by N196 and D200. The active-site Proton acceptor is D200. Residues S244, N245, and K246 each coordinate ATP. An alpha-D-galactose-binding site is contributed by Y254.

Belongs to the GHMP kinase family. GalK subfamily.

It catalyses the reaction alpha-D-galactose + ATP = alpha-D-galactose 1-phosphate + ADP + H(+). It participates in carbohydrate metabolism; galactose metabolism. Galactokinase is a key enzyme in the galactose metabolism where it catalyzes the conversion of alpha-D-galactose to galactose 1-phosphate. Can also induce the transcription of the gal genes in response to the organism being challenged with galactose as the sole source of carbon. The sequence is that of Galactokinase from Candida parapsilosis (Yeast).